The chain runs to 196 residues: MADS-box transcription factor 32 (196 aa).

Positions Met1–Thr61 constitute an MADS-box domain. Positions Arg85–Leu175 constitute a K-box domain.

Its subcellular location is the nucleus. In terms of biological role, probable transcription factor. This chain is MADS-box transcription factor 32 (MADS32), found in Oryza sativa subsp. japonica (Rice).